The sequence spans 586 residues: Zinc finger protein Eos (586 aa).

2 disordered regions span residues 1–42 and 68–98; these read MHTP…APDF and EKEF…SANS. Basic and acidic residues predominate over residues 25–34; it reads QGKDNLEREL. A compositionally biased stretch (polar residues) spans 79-98; it reads SVSTPNSQHSSPSRSLSANS. Residue K100 forms a Glycyl lysine isopeptide (Lys-Gly) (interchain with G-Cter in SUMO2) linkage. A Phosphoserine modification is found at S105. 4 consecutive C2H2-type zinc fingers follow at residues 159–181, 187–209, 215–237, and 248–271; these read LKCD…KRSH, FHCN…IKLH, FKCP…LRTH, and YKCN…ERCH. The interval 281–586 is interaction with FOXP3; the sequence is AQALTGQPGD…HIVRGEHKVG (306 aa). At K335 the chain carries N6-acetyllysine. The disordered stretch occupies residues 413–490; sequence RLELPGSREA…QPPPTIVVGR (78 aa). The CTBP-binding motif PEDLG motif lies at 423-433; it reads GEGPEDLGDGG. Positions 476-485 are enriched in pro residues; that stretch reads QGPPPQPPPT. Residue K501 forms a Glycyl lysine isopeptide (Lys-Gly) (interchain with G-Cter in SUMO2) linkage. C2H2-type zinc fingers lie at residues 531–553 and 559–583; these read FKCE…MGCH and FECN…RGEH.

It belongs to the Ikaros C2H2-type zinc-finger protein family. As to quaternary structure, self-associates. Interacts with other family members; IKZF1, IKZF2, IKZF3 and IKZF5. Interacts with CTBP2, SPI1 and MITF. Interacts with FOXP3 and CTBP1. In terms of tissue distribution, expressed mainly in the brain. Up-regulated in long term cultured astrocytes. Down-regulated during osteoclast differentiation.

The protein localises to the nucleus. Its function is as follows. DNA-binding protein that binds to the 5'GGGAATRCC-3' Ikaros-binding sequence. Interacts with SPI1 and MITF to repress transcription of the CTSK and ACP5 promoters via recruitment of corepressors SIN3A and CTBP2. May be involved in the development of central and peripheral nervous systems. Essential for the inhibitory function of regulatory T-cells (Treg). Mediates FOXP3-mediated gene silencing in regulatory T-cells (Treg) via recruitment of corepressor CTBP1. This Mus musculus (Mouse) protein is Zinc finger protein Eos (Ikzf4).